The sequence spans 139 residues: Acidic phospholipase A2 5 (139 aa).

The first 16 residues, 1-16, serve as a signal peptide directing secretion; it reads MRTLWIVAVWLMGVEG. Cystine bridges form between Cys-42/Cys-131, Cys-44/Cys-60, Cys-59/Cys-111, Cys-65/Cys-139, Cys-66/Cys-104, Cys-73/Cys-97, and Cys-91/Cys-102. Ca(2+)-binding residues include Tyr-43, Gly-45, and Gly-47. His-63 is a catalytic residue. Residue Asp-64 coordinates Ca(2+). Asp-105 is an active-site residue.

The protein belongs to the phospholipase A2 family. Group II subfamily. D49 sub-subfamily. The cofactor is Ca(2+). Expressed by the venom gland.

It localises to the secreted. It carries out the reaction a 1,2-diacyl-sn-glycero-3-phosphocholine + H2O = a 1-acyl-sn-glycero-3-phosphocholine + a fatty acid + H(+). Functionally, PLA2 catalyzes the calcium-dependent hydrolysis of the 2-acyl groups in 3-sn-phosphoglycerides. This Echis pyramidum leakeyi (Leakey's carpet viper) protein is Acidic phospholipase A2 5.